The chain runs to 541 residues: Putative acyl-CoA dehydrogenase AidB (541 aa).

FAD-binding positions include 182–191 (MGMTEKQGGS), threonine 185, serine 191, 216–218 (FFS), serine 218, 423–433 (IWEGSGNIMCL), and asparagine 429. The tract at residues 445 to 541 (VYDLLSEAFV…LLRATGGVCV (97 aa)) is dsDNA-binding.

The protein belongs to the acyl-CoA dehydrogenase family. As to quaternary structure, homotetramer. Dimer of dimers. FAD serves as cofactor.

The protein resides in the cytoplasm. Functionally, part of the adaptive DNA-repair response to alkylating agents. Could prevent alkylation damage by protecting DNA and destroying alkylating agents that have yet to reach their DNA target. Binds to double-stranded DNA with a preference for a DNA region that includes its own promoter. Shows weak isovaleryl-CoA dehydrogenase activity in vitro. The sequence is that of Putative acyl-CoA dehydrogenase AidB (aidB) from Escherichia coli (strain K12).